We begin with the raw amino-acid sequence, 351 residues long: Phosphoribosylformylglycinamidine cyclo-ligase (351 aa).

This sequence belongs to the AIR synthase family.

The protein resides in the cytoplasm. It carries out the reaction 2-formamido-N(1)-(5-O-phospho-beta-D-ribosyl)acetamidine + ATP = 5-amino-1-(5-phospho-beta-D-ribosyl)imidazole + ADP + phosphate + H(+). The protein operates within purine metabolism; IMP biosynthesis via de novo pathway; 5-amino-1-(5-phospho-D-ribosyl)imidazole from N(2)-formyl-N(1)-(5-phospho-D-ribosyl)glycinamide: step 2/2. In Idiomarina loihiensis (strain ATCC BAA-735 / DSM 15497 / L2-TR), this protein is Phosphoribosylformylglycinamidine cyclo-ligase.